Here is a 198-residue protein sequence, read N- to C-terminus: Recombination protein RecR (198 aa).

The C4-type zinc finger occupies 57–72; sequence CSICGNLTESDPCAIC. In terms of domain architecture, Toprim spans 80 to 175; that stretch reads TTILVVEESK…KVTRLARGLA (96 aa).

The protein belongs to the RecR family.

Its function is as follows. May play a role in DNA repair. It seems to be involved in an RecBC-independent recombinational process of DNA repair. It may act with RecF and RecO. The polypeptide is Recombination protein RecR (Lactococcus lactis subsp. lactis (strain IL1403) (Streptococcus lactis)).